Reading from the N-terminus, the 261-residue chain is uncharacterized protein (261 aa).

3 helical membrane passes run 15–35, 87–107, and 131–151; these read WYSVGLIFFSFIPIYYSIIVC, VYLIVLYIILIIHFGFEIRNA, and LLLYFQNLLLLPYICGGYFLI. A compositionally biased stretch (basic and acidic residues) spans 234-246; that stretch reads LEEKKAKRRQNAE. The segment at 234-261 is disordered; the sequence is LEEKKAKRRQNAERRKKRREIAMEQREQ.

It localises to the membrane. This is an uncharacterized protein from Caenorhabditis elegans.